Here is a 124-residue protein sequence, read N- to C-terminus: MKNVLIIFGKPYCSICENVSEAVEELKSEYDILHVDILSFFLKDGDSSMLGDVKRGTLIGNFAAHLSNYIVSIFKYNPQTKQMAFVDINKSLDFTKTDKSLVNLEILKSEIEKATYGVWPPVTE.

A disulfide bridge connects residues Cys13 and Cys16.

This sequence belongs to the glutaredoxin family. Homodimer.

Its subcellular location is the host cytoplasm. Glutaredoxin necessary for virion morphogenesis and virus replication. Functions as a thiol-disulfide transfer protein between membrane-associated OPG128 and substrates OPG095 or OPG053. The complete pathway for formation of disulfide bonds in intracellular virion membrane proteins sequentially involves oxidation of OPG072, OPG128 and OPG088. Exhibit thioltransferase and dehydroascorbate reductase activities in vitro. This chain is Glutaredoxin-2 (OPG088), found in Mus musculus (Mouse).